Reading from the N-terminus, the 256-residue chain is Small ribosomal subunit protein eS1 (256 aa).

The segment covering 1–18 (MAVGKNKRLSKGKKGIKK) has biased composition (basic residues). Residues 1–20 (MAVGKNKRLSKGKKGIKKRT) form a disordered region. Position 2 is an N-acetylalanine; partial (A2).

It belongs to the eukaryotic ribosomal protein eS1 family. Component of the small ribosomal subunit. Mature ribosomes consist of a small (40S) and a large (60S) subunit. The 40S subunit contains about 33 different proteins and 1 molecule of RNA (18S). The 60S subunit contains about 49 different proteins and 3 molecules of RNA (25S, 5.8S and 5S).

The protein resides in the cytoplasm. The chain is Small ribosomal subunit protein eS1 (rps1) from Aspergillus terreus (strain NIH 2624 / FGSC A1156).